A 141-amino-acid polypeptide reads, in one-letter code: ATP synthase epsilon chain (141 aa).

The protein belongs to the ATPase epsilon chain family. F-type ATPases have 2 components, CF(1) - the catalytic core - and CF(0) - the membrane proton channel. CF(1) has five subunits: alpha(3), beta(3), gamma(1), delta(1), epsilon(1). CF(0) has three main subunits: a, b and c.

The protein resides in the cell inner membrane. Its function is as follows. Produces ATP from ADP in the presence of a proton gradient across the membrane. The sequence is that of ATP synthase epsilon chain from Burkholderia mallei (strain NCTC 10247).